A 634-amino-acid polypeptide reads, in one-letter code: 3-dehydroshikimate dehydratase (634 aa).

Residues Glu134, Asp165, Gln191, and Glu239 each contribute to the a divalent metal cation site. VOC domains follow at residues 295–414 (GIEF…LVER) and 440–590 (RVDH…VFTE). Mg(2+)-binding residues include His443, His521, and Glu599.

It belongs to the bacterial two-domain DSD family. In terms of assembly, homodimer. Co(2+) serves as cofactor. It depends on Ni(2+) as a cofactor. Requires Mg(2+) as cofactor. The cofactor is Mn(2+).

The catalysed reaction is 3-dehydroshikimate = 3,4-dihydroxybenzoate + H2O. The protein operates within aromatic compound metabolism; 3,4-dihydroxybenzoate biosynthesis. Functionally, catalyzes the conversion of 3-dehydroshikimate to protocatechuate (3,4-dihydroxybenzoate), a common intermediate of quinate and shikimate degradation pathways. Is required for growth on either quinate or shikimate as a sole carbon source. The chain is 3-dehydroshikimate dehydratase from Pseudomonas aeruginosa (strain ATCC 15692 / DSM 22644 / CIP 104116 / JCM 14847 / LMG 12228 / 1C / PRS 101 / PAO1).